The primary structure comprises 160 residues: Non-secretory ribonuclease (160 aa).

A signal peptide spans 1–27; that stretch reads MVPKLFTSPICLLLLLGLMGVEGSLHA. The C-linked (Man) tryptophan glycan is linked to Trp34. Residue His42 is the Proton acceptor of the active site. A glycan (N-linked (GlcNAc...) asparagine) is linked at Asn44. Intrachain disulfides connect Cys50–Cys110, Cys64–Cys122, Cys82–Cys137, and Cys89–Cys98. Tyr60 bears the 3'-nitrotyrosine mark. Residue 65 to 69 coordinates substrate; that stretch reads KNQNT. N-linked (GlcNAc...) asparagine glycans are attached at residues Asn92, Asn111, and Asn138. His155 acts as the Proton donor in catalysis.

Belongs to the pancreatic ribonuclease family. Interacts with and forms a tight 1:1 complex with RNH1. Dimerization of two such complexes may occur.

It is found in the lysosome. It localises to the cytoplasmic granule. The catalysed reaction is an [RNA] containing cytidine + H2O = an [RNA]-3'-cytidine-3'-phosphate + a 5'-hydroxy-ribonucleotide-3'-[RNA].. It carries out the reaction an [RNA] containing uridine + H2O = an [RNA]-3'-uridine-3'-phosphate + a 5'-hydroxy-ribonucleotide-3'-[RNA].. Functionally, this is a non-secretory ribonuclease. It is a pyrimidine specific nuclease with a slight preference for U. Cytotoxin and helminthotoxin. Possesses a wide variety of biological activities. The chain is Non-secretory ribonuclease (RNASE2) from Papio hamadryas (Hamadryas baboon).